A 222-amino-acid chain; its full sequence is MLDYRQRIDTLITKIEKARIAYSRHHIVKIVAVSKNASPEAIQHYYNCSQRAFGENKVQDLKIKMHSLEHLPLEWHMIGSLQENKINALLSLKPALLHSLDSLKLALKIEKRCEILGVNLNALLQVNSAYEESKSGVVPEEALETYSQISETCKRLKLKGLMCIGAHTDDETKIEKSFTTTKKLFDQIKNASVLSMGMSDDFELAIACGANLLRIGSFLFKE.

K35 bears the N6-(pyridoxal phosphate)lysine mark.

It belongs to the pyridoxal phosphate-binding protein YggS/PROSC family.

In terms of biological role, pyridoxal 5'-phosphate (PLP)-binding protein, which is involved in PLP homeostasis. The polypeptide is Pyridoxal phosphate homeostasis protein (Helicobacter pylori (strain J99 / ATCC 700824) (Campylobacter pylori J99)).